Reading from the N-terminus, the 176-residue chain is Cytidylate kinase (176 aa).

Residue 7–15 participates in ATP binding; the sequence is GPPGSGTTS.

Belongs to the cytidylate kinase family. Type 2 subfamily.

It localises to the cytoplasm. It catalyses the reaction CMP + ATP = CDP + ADP. The enzyme catalyses dCMP + ATP = dCDP + ADP. The chain is Cytidylate kinase from Methanosphaerula palustris (strain ATCC BAA-1556 / DSM 19958 / E1-9c).